Here is a 365-residue protein sequence, read N- to C-terminus: Histidinol-phosphate aminotransferase 2 (365 aa).

K222 bears the N6-(pyridoxal phosphate)lysine mark.

The protein belongs to the class-II pyridoxal-phosphate-dependent aminotransferase family. Histidinol-phosphate aminotransferase subfamily. Homodimer. It depends on pyridoxal 5'-phosphate as a cofactor.

The enzyme catalyses L-histidinol phosphate + 2-oxoglutarate = 3-(imidazol-4-yl)-2-oxopropyl phosphate + L-glutamate. It functions in the pathway amino-acid biosynthesis; L-histidine biosynthesis; L-histidine from 5-phospho-alpha-D-ribose 1-diphosphate: step 7/9. The protein is Histidinol-phosphate aminotransferase 2 (hisC2) of Bordetella parapertussis (strain 12822 / ATCC BAA-587 / NCTC 13253).